We begin with the raw amino-acid sequence, 247 residues long: Programmed cell death 1 ligand 2 (247 aa).

The N-terminal stretch at 1–19 is a signal peptide; the sequence is MLLLLPILNLSLQLHPVAA. At 20–221 the chain is on the extracellular side; it reads LFTVTAPKEV…RMEPKVPRTW (202 aa). An Ig-like V-type domain is found at 21–118; it reads FTVTAPKEVY…AWDYKYLTVK (98 aa). 2 disulfides stabilise this stretch: C42/C102 and C143/C192. 4 N-linked (GlcNAc...) asparagine glycosylation sites follow: N64, N157, N163, and N189. The region spanning 122-203 is the Ig-like C2-type domain; it reads SYMRIDTRIL…FWNAHMKELT (82 aa). Residues 222–242 form a helical membrane-spanning segment; it reads PLHVFIPACTIALIFLAIVII. At 243 to 247 the chain is on the cytoplasmic side; that stretch reads QRKRI.

It belongs to the immunoglobulin superfamily. BTN/MOG family. As to quaternary structure, interacts with PDCD1. Expressed in immature and mature bone marrow-derived dendritic cells and splenic dendritic cells. Highly expressed in placenta, liver and weakly expressed in heart, spleen, lymph nodes and thymus. Also expressed in some tumor cell lines of lymphoid origin.

It is found in the cell membrane. Involved in the costimulatory signal essential for T-cell proliferation and IFNG production in a PDCD1-independent manner. Interaction with PDCD1 inhibits T-cell proliferation by blocking cell cycle progression and cytokine production. This Mus musculus (Mouse) protein is Programmed cell death 1 ligand 2 (Pdcd1lg2).